Here is a 147-residue protein sequence, read N- to C-terminus: uncharacterized protein (147 aa).

Residues 44–147 (LVGYIDKEIH…LKSIKERLSI (104 aa)) form the HTH LytTR-type domain.

The protein localises to the cytoplasm. This is an uncharacterized protein from Staphylococcus aureus (strain Mu50 / ATCC 700699).